A 343-amino-acid chain; its full sequence is Ribosomal RNA small subunit methyltransferase C (343 aa).

Belongs to the methyltransferase superfamily. RsmC family. Monomer.

The protein resides in the cytoplasm. It carries out the reaction guanosine(1207) in 16S rRNA + S-adenosyl-L-methionine = N(2)-methylguanosine(1207) in 16S rRNA + S-adenosyl-L-homocysteine + H(+). Specifically methylates the guanine in position 1207 of 16S rRNA in the 30S particle. This is Ribosomal RNA small subunit methyltransferase C from Escherichia coli (strain ATCC 8739 / DSM 1576 / NBRC 3972 / NCIMB 8545 / WDCM 00012 / Crooks).